The chain runs to 306 residues: tRNA pseudouridine synthase B (306 aa).

Aspartate 48 (nucleophile) is an active-site residue.

The protein belongs to the pseudouridine synthase TruB family. Type 1 subfamily.

The enzyme catalyses uridine(55) in tRNA = pseudouridine(55) in tRNA. Responsible for synthesis of pseudouridine from uracil-55 in the psi GC loop of transfer RNAs. The protein is tRNA pseudouridine synthase B of Ectopseudomonas mendocina (strain ymp) (Pseudomonas mendocina).